A 639-amino-acid polypeptide reads, in one-letter code: NADP-dependent malic enzyme, chloroplastic (639 aa).

The transit peptide at 1 to 49 directs the protein to the chloroplast; it reads MLSARAAATAAAAAASPLWKRGEGGSSGSGSGCTSCREVRRRAAAVRVR. Residues 15 to 34 are disordered; it reads ASPLWKRGEGGSSGSGSGCT. Tyrosine 187 (proton donor) is an active-site residue. Arginine 240 serves as a coordination point for NAD(+). Lysine 258 functions as the Proton acceptor in the catalytic mechanism. Positions 330, 331, and 354 each coordinate a divalent metal cation. Aspartate 354 is an NAD(+) binding site. NADP(+) is bound at residue 383-399; the sequence is LFLGAGEAGTGIAELIA. Residue asparagine 495 participates in NAD(+) binding.

It belongs to the malic enzymes family. Homotetramer. Requires Mg(2+) as cofactor. Mn(2+) serves as cofactor.

Its subcellular location is the plastid. It localises to the chloroplast. The catalysed reaction is (S)-malate + NADP(+) = pyruvate + CO2 + NADPH. It catalyses the reaction oxaloacetate + H(+) = pyruvate + CO2. It participates in photosynthesis; C4 acid pathway. Functionally, the chloroplastic ME isoform decarboxylates malate shuttled from neighboring mesophyll cells. The CO(2) released is then refixed by ribulose-bisphosphate carboxylase. This pathway eliminates the photorespiratory loss of CO(2) that occurs in most plants. The polypeptide is NADP-dependent malic enzyme, chloroplastic (ME6) (Oryza sativa subsp. japonica (Rice)).